Consider the following 119-residue polypeptide: Ribonuclease P protein component (119 aa).

It belongs to the RnpA family. In terms of assembly, consists of a catalytic RNA component (M1 or rnpB) and a protein subunit.

It carries out the reaction Endonucleolytic cleavage of RNA, removing 5'-extranucleotides from tRNA precursor.. Functionally, RNaseP catalyzes the removal of the 5'-leader sequence from pre-tRNA to produce the mature 5'-terminus. It can also cleave other RNA substrates such as 4.5S RNA. The protein component plays an auxiliary but essential role in vivo by binding to the 5'-leader sequence and broadening the substrate specificity of the ribozyme. The polypeptide is Ribonuclease P protein component (Listeria innocua serovar 6a (strain ATCC BAA-680 / CLIP 11262)).